A 102-amino-acid chain; its full sequence is Large ribosomal subunit protein uL24 (102 aa).

This sequence belongs to the universal ribosomal protein uL24 family. In terms of assembly, part of the 50S ribosomal subunit.

One of two assembly initiator proteins, it binds directly to the 5'-end of the 23S rRNA, where it nucleates assembly of the 50S subunit. Its function is as follows. One of the proteins that surrounds the polypeptide exit tunnel on the outside of the subunit. This is Large ribosomal subunit protein uL24 from Leuconostoc mesenteroides subsp. mesenteroides (strain ATCC 8293 / DSM 20343 / BCRC 11652 / CCM 1803 / JCM 6124 / NCDO 523 / NBRC 100496 / NCIMB 8023 / NCTC 12954 / NRRL B-1118 / 37Y).